We begin with the raw amino-acid sequence, 239 residues long: Lipoprotein-releasing system ATP-binding protein LolD (239 aa).

The ABC transporter domain occupies 10–239 (VELSGVRKDY…ADGPHRRSGA (230 aa)). 46–53 (GPSGSGKS) lines the ATP pocket.

This sequence belongs to the ABC transporter superfamily. Lipoprotein translocase (TC 3.A.1.125) family. As to quaternary structure, the complex is composed of two ATP-binding proteins (LolD) and two transmembrane proteins (LolC and LolE).

The protein resides in the cell inner membrane. Its function is as follows. Part of the ABC transporter complex LolCDE involved in the translocation of mature outer membrane-directed lipoproteins, from the inner membrane to the periplasmic chaperone, LolA. Responsible for the formation of the LolA-lipoprotein complex in an ATP-dependent manner. The protein is Lipoprotein-releasing system ATP-binding protein LolD of Anaeromyxobacter dehalogenans (strain 2CP-C).